The sequence spans 272 residues: Energy-coupling factor transporter ATP-binding protein EcfA1 (272 aa).

The region spanning 2-237 (IKVSDVCFSY…KNIIEKAKID (236 aa)) is the ABC transporter domain. 37 to 44 (GHNGSGKS) provides a ligand contact to ATP.

The protein belongs to the ABC transporter superfamily. Energy-coupling factor EcfA family. Forms a stable energy-coupling factor (ECF) transporter complex composed of 2 membrane-embedded substrate-binding proteins (S component), 2 ATP-binding proteins (A component) and 2 transmembrane proteins (T component).

The protein resides in the cell membrane. ATP-binding (A) component of a common energy-coupling factor (ECF) ABC-transporter complex. Unlike classic ABC transporters this ECF transporter provides the energy necessary to transport a number of different substrates. The sequence is that of Energy-coupling factor transporter ATP-binding protein EcfA1 from Mesomycoplasma hyopneumoniae (strain 7448) (Mycoplasma hyopneumoniae).